The primary structure comprises 131 residues: Translation initiation factor 5A (131 aa).

A Hypusine modification is found at Lys-37.

It belongs to the eIF-5A family.

The protein resides in the cytoplasm. Functions by promoting the formation of the first peptide bond. This Methanococcus maripaludis (strain C5 / ATCC BAA-1333) protein is Translation initiation factor 5A (eIF5A).